Consider the following 48-residue polypeptide: Sperm protamine P1 (48 aa).

The protein belongs to the protamine P1 family. In terms of tissue distribution, testis.

The protein resides in the nucleus. It is found in the chromosome. In terms of biological role, protamines substitute for histones in the chromatin of sperm during the haploid phase of spermatogenesis. They compact sperm DNA into a highly condensed, stable and inactive complex. In Corynorhinus townsendii (Townsend's big-eared bat), this protein is Sperm protamine P1 (PRM1).